The following is a 561-amino-acid chain: Putative pectinesterase/pectinesterase inhibitor 24 (561 aa).

A helical membrane pass occupies residues 26 to 46; the sequence is IAIIAVSLVILAGIVIGAVFG. Residues 64-211 form a pectinesterase inhibitor 24 region; the sequence is DSISVSVKAV…TELTSNALAI (148 aa). N-linked (GlcNAc...) asparagine glycosylation is found at asparagine 92, asparagine 130, asparagine 148, and asparagine 200. Residues 255–548 are pectinesterase 24; sequence DIVVAKDGSG…TVKPFIDGGR (294 aa). Substrate-binding residues include threonine 330 and glutamine 360. The active-site Proton donor; for pectinesterase activity is aspartate 383. Residues cysteine 397 and cysteine 417 are joined by a disulfide bond. Aspartate 404 functions as the Nucleophile; for pectinesterase activity in the catalytic mechanism. Residues arginine 468 and tryptophan 470 each contribute to the substrate site. An N-linked (GlcNAc...) asparagine glycan is attached at asparagine 472.

This sequence in the N-terminal section; belongs to the PMEI family. It in the C-terminal section; belongs to the pectinesterase family.

The protein localises to the membrane. The enzyme catalyses [(1-&gt;4)-alpha-D-galacturonosyl methyl ester](n) + n H2O = [(1-&gt;4)-alpha-D-galacturonosyl](n) + n methanol + n H(+). It functions in the pathway glycan metabolism; pectin degradation; 2-dehydro-3-deoxy-D-gluconate from pectin: step 1/5. Its function is as follows. Acts in the modification of cell walls via demethylesterification of cell wall pectin. The sequence is that of Putative pectinesterase/pectinesterase inhibitor 24 (PME24) from Arabidopsis thaliana (Mouse-ear cress).